A 241-amino-acid polypeptide reads, in one-letter code: Pyridoxine 5'-phosphate synthase (241 aa).

Asparagine 7 serves as a coordination point for 3-amino-2-oxopropyl phosphate. 1-deoxy-D-xylulose 5-phosphate is bound at residue aspartate 9 to histidine 10. Arginine 18 contacts 3-amino-2-oxopropyl phosphate. The active-site Proton acceptor is the histidine 43. Residues arginine 45 and histidine 50 each coordinate 1-deoxy-D-xylulose 5-phosphate. Catalysis depends on glutamate 70, which acts as the Proton acceptor. Residue threonine 100 coordinates 1-deoxy-D-xylulose 5-phosphate. The active-site Proton donor is the histidine 191. 3-amino-2-oxopropyl phosphate is bound by residues glycine 192 and glycine 213–histidine 214.

It belongs to the PNP synthase family. Homooctamer; tetramer of dimers.

It is found in the cytoplasm. The catalysed reaction is 3-amino-2-oxopropyl phosphate + 1-deoxy-D-xylulose 5-phosphate = pyridoxine 5'-phosphate + phosphate + 2 H2O + H(+). The protein operates within cofactor biosynthesis; pyridoxine 5'-phosphate biosynthesis; pyridoxine 5'-phosphate from D-erythrose 4-phosphate: step 5/5. Functionally, catalyzes the complicated ring closure reaction between the two acyclic compounds 1-deoxy-D-xylulose-5-phosphate (DXP) and 3-amino-2-oxopropyl phosphate (1-amino-acetone-3-phosphate or AAP) to form pyridoxine 5'-phosphate (PNP) and inorganic phosphate. The polypeptide is Pyridoxine 5'-phosphate synthase (Nostoc punctiforme (strain ATCC 29133 / PCC 73102)).